A 245-amino-acid chain; its full sequence is tRNA pseudouridine synthase A (245 aa).

Residue Asp52 is the Nucleophile of the active site. Tyr111 serves as a coordination point for substrate.

The protein belongs to the tRNA pseudouridine synthase TruA family. As to quaternary structure, homodimer.

It carries out the reaction uridine(38/39/40) in tRNA = pseudouridine(38/39/40) in tRNA. In terms of biological role, formation of pseudouridine at positions 38, 39 and 40 in the anticodon stem and loop of transfer RNAs. This Thermotoga maritima (strain ATCC 43589 / DSM 3109 / JCM 10099 / NBRC 100826 / MSB8) protein is tRNA pseudouridine synthase A.